Consider the following 138-residue polypeptide: Large ribosomal subunit protein uL16 (138 aa).

The protein belongs to the universal ribosomal protein uL16 family. As to quaternary structure, part of the 50S ribosomal subunit.

Binds 23S rRNA and is also seen to make contacts with the A and possibly P site tRNAs. This is Large ribosomal subunit protein uL16 from Nitrosomonas europaea (strain ATCC 19718 / CIP 103999 / KCTC 2705 / NBRC 14298).